Here is a 418-residue protein sequence, read N- to C-terminus: Thyroid hormone receptor alpha-B (418 aa).

A disordered region spans residues 1–40 (MDQNLSGLDCLSEPDEKRWPDGKRKRKNSQCMGKSGMSGD). The tract at residues 1–60 (MDQNLSGLDCLSEPDEKRWPDGKRKRKNSQCMGKSGMSGDSLVSLPPAGYIPSYLDKDEP) is modulating. 2 NR C4-type zinc fingers span residues 61–81 (CVVCSDKATGYHYRCITCEGC) and 99–123 (CKYDGCCIIDKITRNQCQLCRFKKC). The nuclear receptor DNA-binding region spans 61-128 (CVVCSDKATG…RFKKCIAVGM (68 aa)). Positions 171-415 (EEWELIRIVT…PPLFLEVFED (245 aa)) constitute an NR LBD domain.

Belongs to the nuclear hormone receptor family. NR1 subfamily. As to quaternary structure, binds to thyroid hormone receptor element (TRE) weakly as homodimers and monomers, but binds TRE with much higher affinity as heterodimers with retinoid X receptors. Can bind DNA as a heterodimer with either rxra or rxrg.

It is found in the nucleus. Functionally, high affinity receptor for triiodothyronine (T3). This is Thyroid hormone receptor alpha-B (thra-b) from Xenopus laevis (African clawed frog).